Consider the following 96-residue polypeptide: Aspartyl/glutamyl-tRNA(Asn/Gln) amidotransferase subunit C (96 aa).

This sequence belongs to the GatC family. In terms of assembly, heterotrimer of A, B and C subunits.

The enzyme catalyses L-glutamyl-tRNA(Gln) + L-glutamine + ATP + H2O = L-glutaminyl-tRNA(Gln) + L-glutamate + ADP + phosphate + H(+). It carries out the reaction L-aspartyl-tRNA(Asn) + L-glutamine + ATP + H2O = L-asparaginyl-tRNA(Asn) + L-glutamate + ADP + phosphate + 2 H(+). Functionally, allows the formation of correctly charged Asn-tRNA(Asn) or Gln-tRNA(Gln) through the transamidation of misacylated Asp-tRNA(Asn) or Glu-tRNA(Gln) in organisms which lack either or both of asparaginyl-tRNA or glutaminyl-tRNA synthetases. The reaction takes place in the presence of glutamine and ATP through an activated phospho-Asp-tRNA(Asn) or phospho-Glu-tRNA(Gln). In Bacillus licheniformis (strain ATCC 14580 / DSM 13 / JCM 2505 / CCUG 7422 / NBRC 12200 / NCIMB 9375 / NCTC 10341 / NRRL NRS-1264 / Gibson 46), this protein is Aspartyl/glutamyl-tRNA(Asn/Gln) amidotransferase subunit C.